We begin with the raw amino-acid sequence, 870 residues long: MSADPARAESGHTPMMQQYLRIKAEHPDTLVLYRMGDFYELFFDDARKAHRLLDITLTSRGQSAGEPVVMAGVPVHALENYLGKLVKLGESVAIAEQVGDVATAKGPVERKVVRVVTPGTVTDTELLSERVDTLLLAVTRQRASYGLAWLGLSSGTLGLSECGERELAGWLARLGPAEVLVDDRDDAALTAALSTTRTALTRRPAWQFDTALGRRKLCEQLRVASLAGFNAEDVSAAHAAAAALLSYAEHTQGRALAHVGSLAVERASDLLELPPATHRNLELTQTLRGEDAPTLLSLLDVCRTGMGSRALRHWLTHPARVRTAARARHEAIGALMERGGEVLREALRGVSDVERITARIALRQVRPRELTGLRATLLALPALRDGVPRDSALLADLAQQLSPPPEIADLLQRAIADEPAVLLRDGGVIATGHDAALDELRGIAQNCEAFLLDLEARERNRTGIANLRVQFNRVHGFYIEVTQGQVDKVPADYQRRQTLKNAERYITPELKAFEDKALSAQERALAREKLLYDGVLDALQPQLAALGAVARALASLDALAALAERAAVLNWCCPEFVSQPCIEIEQGRHPVVEARLAETGGGSFIPNDCRLDANRRMLVITGPNMGGKSTFMRQVALVVLLAAMGSYVPAAACRLGPVDAIHTRIGAADDLANAQSTFMLEMTEAAAIVHGATEHSLVLMDEIGRGTSTFDGLALAGAIASQLHDRNRAFTLFATHYFELTAFPEKHPRALNVHVSAAESHTGHGDDIVFLHEIQPGPASRSYGVQVARLAGMPAPLLRQARATLEALEAQQAASASQIDLFAAPPPSPPREATELERALAGVEPDTLTPREALDALYRLKSLHERSKEN.

Residue 622-629 (GPNMGGKS) participates in ATP binding.

It belongs to the DNA mismatch repair MutS family.

Functionally, this protein is involved in the repair of mismatches in DNA. It is possible that it carries out the mismatch recognition step. This protein has a weak ATPase activity. In Methylibium petroleiphilum (strain ATCC BAA-1232 / LMG 22953 / PM1), this protein is DNA mismatch repair protein MutS.